The sequence spans 494 residues: Lysine--tRNA ligase (494 aa).

Glutamate 407 and glutamate 414 together coordinate Mg(2+).

It belongs to the class-II aminoacyl-tRNA synthetase family. In terms of assembly, homodimer. Mg(2+) is required as a cofactor.

The protein resides in the cytoplasm. The enzyme catalyses tRNA(Lys) + L-lysine + ATP = L-lysyl-tRNA(Lys) + AMP + diphosphate. The polypeptide is Lysine--tRNA ligase (Lactococcus lactis subsp. cremoris (strain SK11)).